The primary structure comprises 380 residues: Cytochrome b (380 aa).

A run of 4 helical transmembrane segments spans residues 33-53, 77-98, 113-133, and 178-198; these read FGSL…FLAM, WLIR…YLHV, WNIG…GYVL, and FFAF…LHLL. Positions 83 and 97 each coordinate heme b. Residues His182 and His196 each coordinate heme b. Residue His201 participates in a ubiquinone binding. Helical transmembrane passes span 226–246, 288–308, 320–340, and 347–367; these read YKDI…ALFS, LGGV…PILH, FSQF…WIGG, and FIII…LLIP.

The protein belongs to the cytochrome b family. As to quaternary structure, the cytochrome bc1 complex contains 3 respiratory subunits (MT-CYB, CYC1 and UQCRFS1), 2 core proteins (UQCRC1 and UQCRC2) and probably 6 low-molecular weight proteins. Heme b is required as a cofactor.

The protein localises to the mitochondrion inner membrane. Its function is as follows. Component of the ubiquinol-cytochrome c reductase complex (complex III or cytochrome b-c1 complex) that is part of the mitochondrial respiratory chain. The b-c1 complex mediates electron transfer from ubiquinol to cytochrome c. Contributes to the generation of a proton gradient across the mitochondrial membrane that is then used for ATP synthesis. The protein is Cytochrome b (mt-cyb) of Arapaima gigas (Arapaima).